Here is a 417-residue protein sequence, read N- to C-terminus: Serine hydroxymethyltransferase (417 aa).

(6S)-5,6,7,8-tetrahydrofolate is bound by residues Leu-116 and 120-122 (GHL). The residue at position 225 (Lys-225) is an N6-(pyridoxal phosphate)lysine. 350–352 (SPF) contributes to the (6S)-5,6,7,8-tetrahydrofolate binding site.

This sequence belongs to the SHMT family. In terms of assembly, homodimer. Requires pyridoxal 5'-phosphate as cofactor.

The protein resides in the cytoplasm. It carries out the reaction (6R)-5,10-methylene-5,6,7,8-tetrahydrofolate + glycine + H2O = (6S)-5,6,7,8-tetrahydrofolate + L-serine. It participates in one-carbon metabolism; tetrahydrofolate interconversion. It functions in the pathway amino-acid biosynthesis; glycine biosynthesis; glycine from L-serine: step 1/1. Its function is as follows. Catalyzes the reversible interconversion of serine and glycine with tetrahydrofolate (THF) serving as the one-carbon carrier. This reaction serves as the major source of one-carbon groups required for the biosynthesis of purines, thymidylate, methionine, and other important biomolecules. Also exhibits THF-independent aldolase activity toward beta-hydroxyamino acids, producing glycine and aldehydes, via a retro-aldol mechanism. The polypeptide is Serine hydroxymethyltransferase (Ligilactobacillus salivarius (strain UCC118) (Lactobacillus salivarius)).